The chain runs to 353 residues: MAIDENKQKALAAALGQIEKQFGKGSIMRLGEDRSMDVETISTGSLSLDIALGAGGLPMGRIVEIYGPESSGKTTLTLQVIAAAQREGKTCAFIDAEHALDPIYARKLGVDIDNLLCSQPDTGEQALEICDALARSGAVDVIVVDSVAALTPKAEIEGEIGDSHMGLAARMMSQAMRKLAGNLKQSNTLLIFINQIRMKIGVMFGNPETTTGGNALKFYASVRLDIRRIGAVKEGENVVGSETRVKVVKNKIAAPFKQAEFQILYGEGINFYGELVDLGVKEKLIEKAGAWYSYKGEKIGQGKANATAWLKDNPETAKEIEKKVRELLLSNPNSTPDFSVDDSEGVAETNEDF.

67-74 (GPESSGKT) lines the ATP pocket. Positions 330–353 (SNPNSTPDFSVDDSEGVAETNEDF) are disordered. Positions 339 to 353 (SVDDSEGVAETNEDF) are enriched in acidic residues.

Belongs to the RecA family.

The protein localises to the cytoplasm. Its function is as follows. Can catalyze the hydrolysis of ATP in the presence of single-stranded DNA, the ATP-dependent uptake of single-stranded DNA by duplex DNA, and the ATP-dependent hybridization of homologous single-stranded DNAs. It interacts with LexA causing its activation and leading to its autocatalytic cleavage. This Escherichia coli O157:H7 (strain EC4115 / EHEC) protein is Protein RecA.